The chain runs to 313 residues: Sororin-like protein 1 (313 aa).

The short motif at 44 to 46 (FGF) is the FGF motif element. Positions 105–287 (ADENQQSVPT…NDNLKELTPG (183 aa)) are disordered. Positions 107-118 (ENQQSVPTVSIA) are enriched in polar residues. Over residues 123 to 134 (PELPPSSSPLLP) the composition is skewed to pro residues. A compositionally biased stretch (low complexity) spans 135–154 (PNGSESSSPIPLSLLSTSSL). Residues 155–170 (QQRKITPSNLSNTSKP) are compositionally biased toward polar residues. Positions 184 to 196 (HGHHLTRLRKKRR) are enriched in basic residues. Over residues 249–264 (EKKILKTYHSQDKDTA) the composition is skewed to basic and acidic residues. Positions 288 to 310 (KKEYLKSIKKYFQDVDDYQLHVV) are C-terminal Sororin domain.

This sequence belongs to the sororin family. Interacts with Pds5 and Psm3.

The protein resides in the nucleus. Regulator of sister chromatid cohesion in mitosis stabilizing cohesin complex association with chromatin. Antagonizes the action of wpl1 which stimulates cohesin dissociation from chromatin. Cohesion ensures that chromosome partitioning is accurate in dividing cells and may play an important role in DNA repair. This chain is Sororin-like protein 1, found in Schizosaccharomyces pombe (strain 972 / ATCC 24843) (Fission yeast).